Reading from the N-terminus, the 435-residue chain is GTPase Der (435 aa).

EngA-type G domains are found at residues 2–167 and 178–351; these read ATVV…RESG and PKIA…ESYC. GTP contacts are provided by residues 8-15, 55-59, 118-121, 184-191, 231-235, and 297-300; these read GRANVGKS, DTCGV, NKSE, GKPNVGKS, DTAGM, and NKFD. The KH-like domain occupies 352–435; sequence RKVPQQLLSK…PLVIEFKSRR (84 aa).

Belongs to the TRAFAC class TrmE-Era-EngA-EngB-Septin-like GTPase superfamily. EngA (Der) GTPase family. As to quaternary structure, associates with the 50S ribosomal subunit.

GTPase that plays an essential role in the late steps of ribosome biogenesis. This is GTPase Der from Pseudothermotoga lettingae (strain ATCC BAA-301 / DSM 14385 / NBRC 107922 / TMO) (Thermotoga lettingae).